Consider the following 263-residue polypeptide: N-acetylgalactosamine permease IID component (263 aa).

Positions Ser-3–Leu-263 constitute a PTS EIID domain. The next 6 helical transmembrane spans lie at Leu-61 to Met-81, Leu-98 to Met-118, Leu-131 to Trp-151, Thr-178 to Val-198, Phe-215 to Phe-235, and Pro-243 to Leu-263.

It localises to the cell inner membrane. The phosphoenolpyruvate-dependent sugar phosphotransferase system (PTS), a major carbohydrate active -transport system, catalyzes the phosphorylation of incoming sugar substrates concomitant with their translocation across the cell membrane. This system is involved in N-acetylgalactosamine transport. This chain is N-acetylgalactosamine permease IID component (agaD), found in Escherichia coli (strain K12).